A 588-amino-acid polypeptide reads, in one-letter code: Nucleoporin ndc-1 (588 aa).

Positions 1–12 (MMGDSHSSFTTT) are enriched in polar residues. The tract at residues 1–55 (MMGDSHSSFTTTTDEHLYNQFSPGRRKNDFPAASSSSSSPNLRRSPNRTVSSPRV) is disordered. Residues 1–79 (MMGDSHSSFT…FQAEISVRKR (79 aa)) are Cytoplasmic-facing. A compositionally biased stretch (low complexity) spans 31–48 (PAASSSSSSPNLRRSPNR). A helical transmembrane segment spans residues 80–100 (LAGAACGYLSTIFFIVTVSIL). At 101–122 (KLTIWAPFSSVQDSLAWWIYPN) the chain is on the perinuclear space side. The chain crosses the membrane as a helical span at residues 123–143 (AWASIIFVGIASVAMSLFSII). Residues 144–159 (KFCKVDQLPRLAATDT) lie on the Cytoplasmic side of the membrane. Residues 160 to 180 (FALAGVALEFVTRLTFVYTAF) form a helical membrane-spanning segment. Over 181–190 (CVADFSFSRE) the chain is Perinuclear space. The chain crosses the membrane as a helical span at residues 191 to 211 (FAFVAISLAIAISSALVVFRS). Residues 212-255 (DYQLNFSHIQVNSVKTLIDFGTSLPYANISEICGIDAAISYTAA) are Cytoplasmic-facing. Residues 256–276 (VALILVVGPMVSGFSAWWLLL) traverse the membrane as a helical segment. Residue Asn-277 is a topological domain, perinuclear space. The chain crosses the membrane as a helical span at residues 278-298 (IPFHVVLFGLCFTQQFYSKIS). At 299-588 (MKIVNQIVMK…IRMICLTDEL (290 aa)) the chain is on the cytoplasmic side.

It belongs to the NDC1 family.

The protein resides in the nucleus. Its subcellular location is the nuclear pore complex. It is found in the nucleus membrane. Component of the nuclear pore complex (NPC), which plays a key role in de novo assembly and insertion of NPC in the nuclear envelope. Plays a role in postmitotic nuclear pore complex assembly potentially by promoting localization of nuclear pore complex proteins to the nuclear rim. This chain is Nucleoporin ndc-1, found in Caenorhabditis elegans.